Reading from the N-terminus, the 72-residue chain is Large ribosomal subunit protein bL28 (72 aa).

The protein belongs to the bacterial ribosomal protein bL28 family.

This Chlorobium limicola (strain DSM 245 / NBRC 103803 / 6330) protein is Large ribosomal subunit protein bL28.